The following is a 456-amino-acid chain: L-seryl-tRNA(Sec) selenium transferase (456 aa).

Residue Lys288 is modified to N6-(pyridoxal phosphate)lysine.

It belongs to the SelA family. It depends on pyridoxal 5'-phosphate as a cofactor.

It localises to the cytoplasm. The enzyme catalyses L-seryl-tRNA(Sec) + selenophosphate + H(+) = L-selenocysteinyl-tRNA(Sec) + phosphate. It functions in the pathway aminoacyl-tRNA biosynthesis; selenocysteinyl-tRNA(Sec) biosynthesis; selenocysteinyl-tRNA(Sec) from L-seryl-tRNA(Sec) (bacterial route): step 1/1. Converts seryl-tRNA(Sec) to selenocysteinyl-tRNA(Sec) required for selenoprotein biosynthesis. The protein is L-seryl-tRNA(Sec) selenium transferase of Helicobacter hepaticus (strain ATCC 51449 / 3B1).